A 105-amino-acid polypeptide reads, in one-letter code: Heat shock protein HspQ (105 aa).

The disordered stretch occupies residues 77–105; the sequence is MRDEHPEQPSMDELARTIRKQLQAPRLRN.

This sequence belongs to the HspQ family.

The protein resides in the cytoplasm. Its function is as follows. Involved in the degradation of certain denaturated proteins, including DnaA, during heat shock stress. The polypeptide is Heat shock protein HspQ (Salmonella arizonae (strain ATCC BAA-731 / CDC346-86 / RSK2980)).